The primary structure comprises 700 residues: Calpain-2 catalytic subunit (700 aa).

Ala-2 is subject to N-acetylalanine. The propeptide at 2–19 is anchors to the small subunit; it reads AGIAIKLAKDREAAEGLG. Positions 45-344 constitute a Calpain catalytic domain; sequence LFQDPSFPAL…YSRLEICNLT (300 aa). Positions 89, 91, and 96 each coordinate Ca(2+). Cys-105 is a catalytic residue. Ca(2+) is bound by residues Glu-175, Gln-229, and Lys-230. Residues His-262 and Asn-286 contribute to the active site. Ca(2+)-binding residues include Glu-292, Asp-299, Gln-319, and Glu-323. Residues 345–514 form a domain III region; the sequence is PDTLTCDSYK…KKADYQAVDD (170 aa). The segment at 515-529 is linker; sequence EIEANIEEIDANEED. Residues 530–700 form a domain IV region; the sequence is IDDGFRRLFV…LASWLSFSVL (171 aa). Residues Ala-542, Asp-545, Glu-547, Glu-552, Asp-585, Asp-587, Ser-589, Lys-591, Glu-596, Asp-615, Asp-617, Ser-619, Thr-621, Glu-626, Asp-658, and Asn-661 each coordinate Ca(2+). 2 EF-hand domains span residues 572-605 and 602-637; these read FSIE…TKIQ and TKIQ…AGFK.

This sequence belongs to the peptidase C2 family. Forms a heterodimer with a small (regulatory) subunit (CAPNS1). Interacts with CPEB3; this leads to cleavage of CPEB3. Requires Ca(2+) as cofactor. As to expression, ubiquitous.

The protein resides in the cytoplasm. It localises to the cell membrane. The enzyme catalyses Broad endopeptidase specificity.. Its activity is regulated as follows. Activated by 200-1000 micromolar concentrations of calcium and inhibited by calpastatin. Calcium-regulated non-lysosomal thiol-protease which catalyzes limited proteolysis of substrates involved in cytoskeletal remodeling and signal transduction. Proteolytically cleaves MYOC at 'Arg-226'. Proteolytically cleaves CPEB3 following neuronal stimulation which abolishes CPEB3 translational repressor activity, leading to translation of CPEB3 target mRNAs. The protein is Calpain-2 catalytic subunit (Capn2) of Mus musculus (Mouse).